The chain runs to 122 residues: NADH-quinone oxidoreductase subunit A (122 aa).

3 helical membrane-spanning segments follow: residues 10-30 (MIVL…LTLG), 66-86 (IFAL…PWAV), and 91-111 (LGLF…VGLA).

The protein belongs to the complex I subunit 3 family. NDH-1 is composed of 14 different subunits. Subunits NuoA, H, J, K, L, M, N constitute the membrane sector of the complex.

Its subcellular location is the cell membrane. The catalysed reaction is a quinone + NADH + 5 H(+)(in) = a quinol + NAD(+) + 4 H(+)(out). NDH-1 shuttles electrons from NADH, via FMN and iron-sulfur (Fe-S) centers, to quinones in the respiratory chain. The immediate electron acceptor for the enzyme in this species is believed to be a menaquinone. Couples the redox reaction to proton translocation (for every two electrons transferred, four hydrogen ions are translocated across the cytoplasmic membrane), and thus conserves the redox energy in a proton gradient. In Bacillus anthracis, this protein is NADH-quinone oxidoreductase subunit A.